We begin with the raw amino-acid sequence, 575 residues long: MILPSEKSATDVAAQCFLNALIRETKDWQLAEYPPDELIIPLDEQKSLHFRVAYFSPTQHHRFAFPAHLVTASGSYPVDFTTLSRLIIDKLRHQLFLPVPLCETFHQRVLESYAHTQQTIDARHDWAILREKALNFGEAEQALLTGHAFHPAPKSHEPFNRQEAERYLPDMAPHFPLRWFSVDKTQIAGESLHLNLQQRLTRFAAENAPQLLNELSDNQWLFPLRPWQGEYLFQQVWCQALFAKGLIRDLGEAGTSWLPTTSSRSLYCATSRDMIKFSLSVRLTNSVRTLSVKEVERGMRLARLAQTDGWQMLQARFPTFRVMQEDDWTGLRDLNGNIMQESLFSPAWKTLLLEQPQSQTNVLVSLTQAGPHGGDSLLVSAVKRLSDRLGITVQQAAHAWVDAYCQQVLKPLFTAEADYGLVLLAHQQNILVQMLGDLPVGFIYRDCQGSAFMPHATEWLDTIDEAQAENIFTREQLLRYFPYYLLVNSTFAVTAALGAAGLDSEANLMARVRTLLAEVRDQVTHKTCLNYVLESPYWNVKGNFFCYLNDHNENTIVDPSVIYFDFANPLQAQEV.

Belongs to the IucA/IucC family.

The catalysed reaction is N(6)-acetyl-N(6)-hydroxy-L-lysine + citrate + ATP = N(2)-citryl-N(6)-acetyl-N(6)-hydroxy-L-lysine + AMP + diphosphate + H(+). It participates in siderophore biosynthesis; aerobactin biosynthesis. Its function is as follows. Catalyzes the attachment of a first N-acetyl-N-hydroxylysine to a carboxylic group of citric acid to yield N-citryl-N-acetyl-N-hydroxylysine. Involved in the biosynthesis of the siderophore aerobactin which is a chelator that mediates the high-affinity iron transport systems induced under iron-stressed conditions. The protein is N(2)-citryl-N(6)-acetyl-N(6)-hydroxylysine synthase (iucA) of Escherichia coli.